The primary structure comprises 274 residues: Large ribosomal subunit protein uL2 (274 aa).

The interval 223-256 (VVMNPVDHPHGGGEGKTGEGRHPVDPWGNLTKGY) is disordered. The span at 229 to 246 (DHPHGGGEGKTGEGRHPV) shows a compositional bias: basic and acidic residues.

The protein belongs to the universal ribosomal protein uL2 family. Part of the 50S ribosomal subunit. Forms a bridge to the 30S subunit in the 70S ribosome.

One of the primary rRNA binding proteins. Required for association of the 30S and 50S subunits to form the 70S ribosome, for tRNA binding and peptide bond formation. It has been suggested to have peptidyltransferase activity; this is somewhat controversial. Makes several contacts with the 16S rRNA in the 70S ribosome. The sequence is that of Large ribosomal subunit protein uL2 from Albidiferax ferrireducens (strain ATCC BAA-621 / DSM 15236 / T118) (Rhodoferax ferrireducens).